Reading from the N-terminus, the 172-residue chain is Ribosome maturation factor RimM (172 aa).

In terms of domain architecture, PRC barrel spans 96 to 168; it reads DGEFYYHEII…RIEVELMEGL (73 aa).

It belongs to the RimM family. As to quaternary structure, binds ribosomal protein uS19.

The protein localises to the cytoplasm. Functionally, an accessory protein needed during the final step in the assembly of 30S ribosomal subunit, possibly for assembly of the head region. Essential for efficient processing of 16S rRNA. May be needed both before and after RbfA during the maturation of 16S rRNA. It has affinity for free ribosomal 30S subunits but not for 70S ribosomes. The chain is Ribosome maturation factor RimM from Streptococcus thermophilus (strain CNRZ 1066).